Consider the following 118-residue polypeptide: Movement protein TGB2 (118 aa).

Residues 1-11 lie on the Cytoplasmic side of the membrane; sequence MSREITARPNK. The chain crosses the membrane as a helical span at residues 12–32; the sequence is NVPIVVGVCVVAFFVLLAFMQ. Residues 33 to 81 are Lumenal-facing; the sequence is QKHKTHSGGDYGVPTFSNGGKYRDGTRSADFNSNNHRAYGCGGSGGSVS. The helical transmembrane segment at 82-102 threads the bilayer; the sequence is SRVGQQLVVLAIVSVLIVSLL. At 103 to 118 the chain is on the cytoplasmic side; it reads QRLRSPPEHICNGACG.

Belongs to the virgaviridae/benyvirus TGB2 movement protein family. Interacts with movement protein TGB3.

The protein resides in the host cell junction. It localises to the host plasmodesma. The protein localises to the host endoplasmic reticulum membrane. Its function is as follows. Participates in the transport of viral RNA to the plasmodesmata. Is probably targeted to plasmodesmata by TGBp3, along with viral RNAs-TGBp1 (RNP complex). Can gate plasmodesmata and increase their size exclusion limit. The sequence is that of Movement protein TGB2 from Beet necrotic yellow vein virus (isolate Japan/S) (BNYVV).